The chain runs to 479 residues: MASIRELHSQLVRKERSAVEIAEAALQRIETLEPQLKSFLHVTADQAIAQAKAVDQRIAAGEEISLLAGIPIGIKDNLCTRGIPTTCASKILQGFVPPYESTVTQRLAEAGAVAVGKTNLDEFAVGSSTENSAYQTTANPWDLTRVPGGSSGGSAAAVAADECVVALGSDTGGSIRQPAAFCGVVGLKPTYGLVSRYGLVAYASSLDQIGPFSRSVEDTAILLGAIAGHDPKDATSLKVEVPDYTQFLKPSLAGIKVGVITETVTDSPAGQAMQAALEVLQGLGAEIREISCPRFAYGLPAYYIIAPSEASANLARYDGVKYGYRVEEAETLIDMYCRTRAEGFGSEVKRRIMIGTYALSAGYYDAYYLKAQKVRTLIKQDFEAAFAEVDVLVSPTTPTTAFKAGEKTADPLSMYLSDLMTIPVNSAGLPGLSLPCGFDEAGLPYGLQIIGNVLREDQVLHTAYAYEQATEWHLRQPAL.

Catalysis depends on charge relay system residues lysine 75 and serine 150. Residue serine 174 is the Acyl-ester intermediate of the active site.

This sequence belongs to the amidase family. GatA subfamily. In terms of assembly, heterotrimer of A, B and C subunits.

The enzyme catalyses L-glutamyl-tRNA(Gln) + L-glutamine + ATP + H2O = L-glutaminyl-tRNA(Gln) + L-glutamate + ADP + phosphate + H(+). Functionally, allows the formation of correctly charged Gln-tRNA(Gln) through the transamidation of misacylated Glu-tRNA(Gln) in organisms which lack glutaminyl-tRNA synthetase. The reaction takes place in the presence of glutamine and ATP through an activated gamma-phospho-Glu-tRNA(Gln). The polypeptide is Glutamyl-tRNA(Gln) amidotransferase subunit A (Synechococcus sp. (strain ATCC 27144 / PCC 6301 / SAUG 1402/1) (Anacystis nidulans)).